We begin with the raw amino-acid sequence, 777 residues long: Semaphorin-4F (777 aa).

An N-terminal signal peptide occupies residues 1 to 40 (MLARAERPRPGPRPPPVSLFPPPSSLLLLLLAMLSAPVCG). At 41-667 (RVPRSVPRTS…PANRAHTVVG (627 aa)) the chain is on the extracellular side. The Sema domain maps to 48 to 516 (RTSLPISEAD…SHTEVTQVNT (469 aa)). N-linked (GlcNAc...) asparagine glycosylation is present at N70. C118 and C128 are disulfide-bonded. Residue N139 is glycosylated (N-linked (GlcNAc...) asparagine). Cystine bridges form between C146–C155, C279–C390, and C303–C349. N515 is a glycosylation site (N-linked (GlcNAc...) asparagine). A PSI domain is found at 518 to 569 (NCGRLQSCSECILAQDPVCAWSFRLDACVAHAGEHRGMVQDIESADVSSLCP). Disulfide bonds link C519/C536, C528/C545, and C593/C634. The 56-residue stretch at 586-641 (VGHVVLPCSPSSAWASCVWHQPSGVTSLTPRRDGLEVVVTPGAMGAYACECQEGGA) folds into the Ig-like C2-type domain. Residues 668 to 688 (AGLVGFFLGVLAASLTLLLIG) traverse the membrane as a helical segment. Residues 689 to 777 (RRQQRRRQRE…PLATCDETSI (89 aa)) lie on the Cytoplasmic side of the membrane. Residues 703–742 (DKVGLDLGAPPSGTTSYSQDPPSPSPEDERLPLALGKRGS) form a disordered region. 2 positions are modified to phosphoserine: S725 and S727. The short motif at 775–777 (TSI) is the PDZ-binding element.

This sequence belongs to the semaphorin family. In terms of assembly, interacts (via PDZ-binding motif) with DLG4/SAP90 (via PDZ domain 2); this interaction may promote translocation of DLG4/SAP90 to the membrane. As to expression, expressed throughout the adult brain, where it shows particularly strong expression in the hippocampus, corpus callosum, granular layer and deep nuclei of the cerebellum, and the mitral layer of the olfactory bulb (at protein level). At the cellular level, detected in neuronal precursors, postmitotic neurons, pyramidal neurons, and glial cells including mature oligodendocytes and oligodendroglial precursor cells (at protein level).

The protein localises to the cell membrane. It is found in the postsynaptic density. The protein resides in the perikaryon. It localises to the cell projection. Its subcellular location is the dendrite. In terms of biological role, probable cell surface receptor that regulates oligodendroglial precursor cell migration. Might also regulate differentiation of oligodendroglial precursor cells. Has growth cone collapse activity against retinal ganglion-cell axons. This Mus musculus (Mouse) protein is Semaphorin-4F (Sema4f).